A 137-amino-acid polypeptide reads, in one-letter code: Small ribosomal subunit protein uS9 (137 aa).

It belongs to the universal ribosomal protein uS9 family.

The protein is Small ribosomal subunit protein uS9 (rps9) of Sulfurisphaera tokodaii (strain DSM 16993 / JCM 10545 / NBRC 100140 / 7) (Sulfolobus tokodaii).